Consider the following 382-residue polypeptide: MKVLHFGAGNIGRGFIGKLLADAGVEVVFADVNQQVLDALNQRHQYQVRVVGEQAQVETVRGVSAVHSGSDDVVALIASVDLVTAAVGPQILERIAPAIARGLVKRHDGGGTQPLNIIACENMVRGTSQLKQHVLNALEPRYHAWVDQHVGFVDSAVDRIVPPVEAGSDDPLAVTVESFSEWILDKTQFKGVPPALGGMELTDNLMAFMERKLFTLNTGHAITAYLGQLAGHQTIRDAILDPAVRQTVKGAMEESGAVLINRYGFDARKHAAYINKILQRFENPYLHDDVERVGRQPLRKLGAGDRLIKPLRGTLEYGLGDANLVTGIAAAMHYHSDQDPQAKEWAALLAEVGPQAALAKVSGLEEDSEVVAQVVNAYNAMQ.

3 to 14 lines the NAD(+) pocket; sequence VLHFGAGNIGRG.

Belongs to the mannitol dehydrogenase family.

It carries out the reaction D-mannitol 1-phosphate + NAD(+) = beta-D-fructose 6-phosphate + NADH + H(+). This Sodalis glossinidius (strain morsitans) protein is Mannitol-1-phosphate 5-dehydrogenase.